Reading from the N-terminus, the 87-residue chain is HssA/B-like protein 8 (87 aa).

Residues Met1–Ala22 are compositionally biased toward polar residues. Residues Met1 to Gly24 form a disordered region.

Belongs to the hssA/B family.

The chain is HssA/B-like protein 8 (hssl8) from Dictyostelium discoideum (Social amoeba).